A 90-amino-acid chain; its full sequence is Large ribosomal subunit protein bL31 (90 aa).

Residues 65-90 (YSKQEGSGSKSNKSKSTKSKKGKGKK) are disordered. A compositionally biased stretch (basic residues) spans 76–90 (NKSKSTKSKKGKGKK).

Belongs to the bacterial ribosomal protein bL31 family. Type A subfamily. In terms of assembly, part of the 50S ribosomal subunit.

Binds the 23S rRNA. The sequence is that of Large ribosomal subunit protein bL31 from Trichodesmium erythraeum (strain IMS101).